A 303-amino-acid chain; its full sequence is Mitochondrial carrier homolog 2 (303 aa).

At Ala2 the chain carries N-acetylalanine. Residues 2 to 15 (ADAASQVLLGSGLT) are Mitochondrial intermembrane-facing. Solcar repeat units lie at residues 2 to 98 (ADAA…YQEC) and 118 to 206 (DRVI…VNTY). The helical transmembrane segment at 16 to 36 (ILSQPLMYVKVLIQVGYEPLA) threads the bilayer. Residues 37-77 (PTVGRNIFGRQVCQLPGLFCYAQHIASIDGKRGLFTGLTPR) lie on the Cytoplasmic side of the membrane. The chain crosses the membrane as a helical span at residues 78 to 92 (LCSGVLGTVVHGKVL). The Mitochondrial intermembrane segment spans residues 93–135 (QHYQECDKAEESGSGNVQKEVSSSFDRVIKETTREMMARSAAT). A helical membrane pass occupies residues 136-156 (LITHPFHVITLRSMVQFIGRE). Over 157–180 (SKYCGLCDSIATIYREEGILGFFA) the chain is Cytoplasmic. The helical transmembrane segment at 181-199 (GLIPRLLGDIISLWLCNSL) threads the bilayer. At 200-231 (AYLVNTYALDSGVSTMNEMKSYSQAVTGFFAS) the chain is on the mitochondrial intermembrane side. The helical transmembrane segment at 232–252 (MLTYPFVLVSNLMAVNNCGLA) threads the bilayer. The Cytoplasmic segment spans residues 253–280 (GGCPPYAPIYSSWIDCWCMLQKEGNMSR). The helical transmembrane segment at 281-303 (GNSLFFRKVPFGKTYCCDLRMLI) threads the bilayer.

This sequence belongs to the mitochondrial carrier (TC 2.A.29) family. Interacts with p15BID.

It is found in the mitochondrion outer membrane. Protein insertase that mediates insertion of transmembrane proteins into the mitochondrial outer membrane. Catalyzes insertion of proteins with alpha-helical transmembrane regions, such as signal-anchored, tail-anchored and multi-pass membrane proteins. Does not mediate insertion of beta-barrel transmembrane proteins. Also acts as a receptor for the truncated form of pro-apoptotic BH3-interacting domain death agonist (p15 BID) and has therefore a critical function in apoptosis. Regulates the quiescence/cycling of hematopoietic stem cells (HSCs). Acts as a regulator of mitochondrial fusion, essential for the naive-to-primed interconversion of embryonic stem cells (ESCs). Acts as a regulator of lipid homeostasis and has a regulatory role in adipocyte differentiation and biology. This chain is Mitochondrial carrier homolog 2 (MTCH2), found in Bos taurus (Bovine).